The following is a 188-amino-acid chain: U1 small nuclear ribonucleoprotein C-2 (188 aa).

A Matrin-type zinc finger spans residues 4–36 (YYCDYCDVFLVSESPSVRKAHNSGRNHLTNVRD). The tract at residues 57-188 (FETGGGNSTS…MNPDRARQLG (132 aa)) is disordered. The span at 72–82 (GNPPGSQPGPP) shows a compositional bias: pro residues. Positions 109–124 (AMLALMNGQNGMSSPG) are enriched in low complexity. Positions 125 to 141 (SGPPPMRFAGPPIPNNM) are enriched in pro residues.

The protein belongs to the U1 small nuclear ribonucleoprotein C family. U1 snRNP is composed of the 7 core Sm proteins B/B', D1, D2, D3, E, F and G that assemble in a heptameric protein ring on the Sm site of the small nuclear RNA to form the core snRNP, and at least 3 U1 snRNP-specific proteins U1-70K, U1-A and U1-C. U1-C interacts with U1 snRNA and the 5' splice-site region of the pre-mRNA.

Its subcellular location is the nucleus. Its function is as follows. Component of the spliceosomal U1 snRNP, which is essential for recognition of the pre-mRNA 5' splice-site and the subsequent assembly of the spliceosome. U1-C is directly involved in initial 5' splice-site recognition for both constitutive and regulated alternative splicing. The interaction with the 5' splice-site seems to precede base-pairing between the pre-mRNA and the U1 snRNA. Stimulates commitment or early (E) complex formation by stabilizing the base pairing of the 5' end of the U1 snRNA and the 5' splice-site region. In Puccinia graminis f. sp. tritici (strain CRL 75-36-700-3 / race SCCL) (Black stem rust fungus), this protein is U1 small nuclear ribonucleoprotein C-2.